The primary structure comprises 91 residues: Acylphosphatase (91 aa).

In terms of domain architecture, Acylphosphatase-like spans Cys5–Arg91. Active-site residues include Arg20 and Asn38.

Belongs to the acylphosphatase family.

It catalyses the reaction an acyl phosphate + H2O = a carboxylate + phosphate + H(+). In Pseudomonas paraeruginosa (strain DSM 24068 / PA7) (Pseudomonas aeruginosa (strain PA7)), this protein is Acylphosphatase (acyP).